A 538-amino-acid polypeptide reads, in one-letter code: UPF0761 membrane protein PsycPRwf_0630 (538 aa).

6 consecutive transmembrane segments (helical) span residues 43–63 (LLSIVPILTVLLMILSSVPAL), 100–120 (LTAIGALALFVTTIMTLTTIE), 143–163 (WTIITLGPLVLGTAFLVSSAV), 183–203 (WVQVVSFAVTIAGFIGMYWFI), 215–235 (IAGVFVAVTFELLKYSFGIIM), and 247–267 (AFAALPIFLLWIYLSWNLILL). A disordered region spans residues 427 to 538 (SVFSAQDADA…IITEDDNPNK (112 aa)). The segment covering 482–493 (PPDADIKAAAAK) has biased composition (low complexity). Over residues 503–514 (KHTETAKQEHKK) the composition is skewed to basic and acidic residues.

It belongs to the UPF0761 family.

The protein localises to the cell inner membrane. This Psychrobacter sp. (strain PRwf-1) protein is UPF0761 membrane protein PsycPRwf_0630.